We begin with the raw amino-acid sequence, 269 residues long: Short-chain dehydrogenase/reductase ABA4 (269 aa).

Residues Ile34, Asp80, Arg144, Tyr174, Lys178, Ile207, and Thr209 each coordinate NADP(+). Tyr174 serves as the catalytic Proton donor. Lys178 acts as the Lowers pKa of active site Tyr in catalysis.

It belongs to the short-chain dehydrogenases/reductases (SDR) family.

It participates in hormone biosynthesis. Its function is as follows. Short-chain dehydrogenase/reductase involved in the biosynthesis of abscisic acid (ABA), a phytohormone that acts antagonistically toward salicylic acid (SA), jasmonic acid (JA) and ethylene (ETH) signaling, to impede plant defense responses. During pathogen-host interaction, ABA plays a dual role in disease severity by increasing plant susceptibility and accelerating pathogenesis in the fungus itself. The first step of the pathway catalyzes the reaction from farnesyl diphosphate to alpha-ionylideneethane performed by the alpha-ionylideneethane synthase ABA3 via a three-step reaction mechanism involving 2 neutral intermediates, beta-farnesene and allofarnesene. The cytochrome P450 monooxygenase ABA1 might then be involved in the conversion of alpha-ionylideneethane to alpha-ionylideneacetic acid. Alpha-ionylideneacetic acid is further converted to abscisic acid in 2 steps involving the cytochrome P450 monooxygenase ABA2 and the short-chain dehydrogenase/reductase ABA4, via the intermediates 1'-deoxy-ABA or 1',4'-trans-diol-ABA, depending on the order of action of these 2 enzymes. ABA2 is responsible for the hydroxylation of carbon atom C-1' and ABA4 might be involved in the oxidation of the C-4' carbon atom. This chain is Short-chain dehydrogenase/reductase ABA4 (ABA4), found in Pyricularia oryzae (strain Y34) (Rice blast fungus).